A 325-amino-acid polypeptide reads, in one-letter code: Thiamine-monophosphate kinase (325 aa).

Residues Asp-27 and Asp-44 each contribute to the Mg(2+) site. His-51 lines the substrate pocket. Asp-73 is a Mg(2+) binding site. Residues Tyr-103, 120–121 (GD), and Arg-147 contribute to the ATP site. Asp-121 lines the Mg(2+) pocket. Mg(2+) is bound at residue Asp-215. ATP is bound at residue Ser-217. Asp-218 contacts Mg(2+). Substrate contacts are provided by Glu-264 and Tyr-321.

Belongs to the thiamine-monophosphate kinase family.

It catalyses the reaction thiamine phosphate + ATP = thiamine diphosphate + ADP. The protein operates within cofactor biosynthesis; thiamine diphosphate biosynthesis; thiamine diphosphate from thiamine phosphate: step 1/1. Its function is as follows. Catalyzes the ATP-dependent phosphorylation of thiamine-monophosphate (TMP) to form thiamine-pyrophosphate (TPP), the active form of vitamin B1. The polypeptide is Thiamine-monophosphate kinase (Bacillus subtilis (strain 168)).